Here is a 96-residue protein sequence, read N- to C-terminus: MKIRPLHDRVVVRRMEEERTTAGGIVIPDSATEKPMRGEIIAVGAGKVLENGDVRALAVKVGDVVLFGKYSGTEVKVDGKELVVMREDDIMGVIEK.

It belongs to the GroES chaperonin family. In terms of assembly, heptamer of 7 subunits arranged in a ring. Interacts with the chaperonin GroEL.

It is found in the cytoplasm. Together with the chaperonin GroEL, plays an essential role in assisting protein folding. The GroEL-GroES system forms a nano-cage that allows encapsulation of the non-native substrate proteins and provides a physical environment optimized to promote and accelerate protein folding. GroES binds to the apical surface of the GroEL ring, thereby capping the opening of the GroEL channel. The protein is Co-chaperonin GroES of Legionella pneumophila (strain Paris).